The following is a 162-amino-acid chain: Phosphopantetheine adenylyltransferase (162 aa).

Residue Thr10 participates in substrate binding. ATP-binding positions include 10–11 (TF) and His18. Substrate is bound by residues Lys42, Leu74, and Arg88. Residues 89-91 (GLR), Glu99, and 124-130 (FSCISST) each bind ATP.

Belongs to the bacterial CoaD family. In terms of assembly, homohexamer. Requires Mg(2+) as cofactor.

It is found in the cytoplasm. The enzyme catalyses (R)-4'-phosphopantetheine + ATP + H(+) = 3'-dephospho-CoA + diphosphate. Its pathway is cofactor biosynthesis; coenzyme A biosynthesis; CoA from (R)-pantothenate: step 4/5. Functionally, reversibly transfers an adenylyl group from ATP to 4'-phosphopantetheine, yielding dephospho-CoA (dPCoA) and pyrophosphate. The chain is Phosphopantetheine adenylyltransferase from Francisella philomiragia subsp. philomiragia (strain ATCC 25017 / CCUG 19701 / FSC 153 / O#319-036).